Consider the following 247-residue polypeptide: Lys-63-specific deubiquitinase BRCC36 (247 aa).

Position 2 is an N-acetylalanine (Ala-2). The MPN domain maps to 12–179; that stretch reads VHLESDAFLV…YTCFQSIQAQ (168 aa). Residues His-122, His-124, and Asp-135 each coordinate Zn(2+). The JAMM motif signature appears at 122-135; that stretch reads HSHPHITVWPSHVD. Position 189 is a phosphoserine (Ser-189).

The protein belongs to the peptidase M67A family. BRCC36 subfamily. As to quaternary structure, component of the ARISC complex, at least composed of UIMC1/RAP80, ABRAXAS1, BRCC3/BRCC36, BABAM2 and BABAM1/NBA1. Component of the BRCA1-A complex, at least composed of BRCA1, BARD1, UIMC1/RAP80, ABRAXAS1, BRCC3/BRCC36, BABAM2 and BABAM1/NBA1. In the BRCA1-A complex, interacts directly with ABRAXAS1 and BABAM2. Component of the BRISC complex, at least composed of ABRAXAS2, BRCC3/BRCC36, BABAM2 and BABAM1/NBA1. Identified in a complex with SHMT2 and the other subunits of the BRISC complex. In the BRISC complex, interacts directly with ABRAXAS2. Identified in a complex with ABRAXAS2 and NUMA1. The BRISC complex interacts with the CSN complex. Component of the BRCA1/BRCA2 containing complex (BRCC), which also contains BRCA1, BRCA2, BARD1, BABAM2 and RAD51. BRCC is a ubiquitin E3 ligase complex that enhances cellular survival following DNA damage. Interacts with BRCA1. Binds polyubiquitin. Interacts with PWWP2B. Interacts with HDAC1; this interaction is enhanced in the presence of PWWP2B. It depends on Zn(2+) as a cofactor.

It localises to the nucleus. The protein localises to the cytoplasm. Its subcellular location is the cytoskeleton. It is found in the spindle pole. Functionally, metalloprotease that specifically cleaves 'Lys-63'-linked polyubiquitin chains. Does not have activity toward 'Lys-48'-linked polyubiquitin chains. Component of the BRCA1-A complex, a complex that specifically recognizes 'Lys-63'-linked ubiquitinated histones H2A and H2AX at DNA lesions sites, leading to target the BRCA1-BARD1 heterodimer to sites of DNA damage at double-strand breaks (DSBs). In the BRCA1-A complex, it specifically removes 'Lys-63'-linked ubiquitin on histones H2A and H2AX, antagonizing the RNF8-dependent ubiquitination at double-strand breaks (DSBs). Catalytic subunit of the BRISC complex, a multiprotein complex that specifically cleaves 'Lys-63'-linked ubiquitin in various substrates. Mediates the specific 'Lys-63'-specific deubiquitination associated with the COP9 signalosome complex (CSN), via the interaction of the BRISC complex with the CSN complex. The BRISC complex is required for normal mitotic spindle assembly and microtubule attachment to kinetochores via its role in deubiquitinating NUMA1. Plays a role in interferon signaling via its role in the deubiquitination of the interferon receptor IFNAR1; deubiquitination increases IFNAR1 activity by enhancing its stability and cell surface expression. Acts as a regulator of the NLRP3 inflammasome by mediating deubiquitination of NLRP3, leading to NLRP3 inflammasome assembly. Down-regulates the response to bacterial lipopolysaccharide (LPS) via its role in IFNAR1 deubiquitination. Deubiquitinates HDAC1 and PWWP2B leading to their stabilization. The protein is Lys-63-specific deubiquitinase BRCC36 (BRCC3) of Pongo abelii (Sumatran orangutan).